The primary structure comprises 703 residues: Polyribonucleotide nucleotidyltransferase (703 aa).

The Mg(2+) site is built by Asp486 and Asp492. Residues 554–613 (PKIITTNIDPEKIRDVIGPGGKMINKIIAETGVKIDIEEDGRVYILTPDSAAAQKALKII) enclose the KH domain. The S1 motif domain maps to 623–691 (GEVYLGKVVR…KQGRINLSRK (69 aa)).

It belongs to the polyribonucleotide nucleotidyltransferase family. Mg(2+) is required as a cofactor.

Its subcellular location is the cytoplasm. It carries out the reaction RNA(n+1) + phosphate = RNA(n) + a ribonucleoside 5'-diphosphate. In terms of biological role, involved in mRNA degradation. Catalyzes the phosphorolysis of single-stranded polyribonucleotides processively in the 3'- to 5'-direction. In Ruminiclostridium cellulolyticum (strain ATCC 35319 / DSM 5812 / JCM 6584 / H10) (Clostridium cellulolyticum), this protein is Polyribonucleotide nucleotidyltransferase.